Here is a 154-residue protein sequence, read N- to C-terminus: Aspartate carbamoyltransferase regulatory chain (154 aa).

Zn(2+) is bound by residues Cys-109, Cys-114, Cys-138, and Cys-141.

This sequence belongs to the PyrI family. In terms of assembly, contains catalytic and regulatory chains. It depends on Zn(2+) as a cofactor.

Its function is as follows. Involved in allosteric regulation of aspartate carbamoyltransferase. This Serratia proteamaculans (strain 568) protein is Aspartate carbamoyltransferase regulatory chain.